The sequence spans 251 residues: Pyrroloquinoline-quinone synthase (251 aa).

It belongs to the PqqC family.

It carries out the reaction 6-(2-amino-2-carboxyethyl)-7,8-dioxo-1,2,3,4,7,8-hexahydroquinoline-2,4-dicarboxylate + 3 O2 = pyrroloquinoline quinone + 2 H2O2 + 2 H2O + H(+). The protein operates within cofactor biosynthesis; pyrroloquinoline quinone biosynthesis. Ring cyclization and eight-electron oxidation of 3a-(2-amino-2-carboxyethyl)-4,5-dioxo-4,5,6,7,8,9-hexahydroquinoline-7,9-dicarboxylic-acid to PQQ. The sequence is that of Pyrroloquinoline-quinone synthase from Pseudomonas putida (strain ATCC 700007 / DSM 6899 / JCM 31910 / BCRC 17059 / LMG 24140 / F1).